The primary structure comprises 926 residues: Probable zinc protease PqqL (926 aa).

Zn(2+) is bound at residue histidine 79. Glutamate 82 acts as the Proton acceptor in catalysis. Positions 83 and 159 each coordinate Zn(2+).

Belongs to the peptidase M16 family. Zn(2+) is required as a cofactor.

This chain is Probable zinc protease PqqL (pqqL), found in Haemophilus influenzae (strain ATCC 51907 / DSM 11121 / KW20 / Rd).